Here is a 177-residue protein sequence, read N- to C-terminus: Adenine phosphoribosyltransferase (177 aa).

This sequence belongs to the purine/pyrimidine phosphoribosyltransferase family. In terms of assembly, homodimer.

It localises to the cytoplasm. The catalysed reaction is AMP + diphosphate = 5-phospho-alpha-D-ribose 1-diphosphate + adenine. The protein operates within purine metabolism; AMP biosynthesis via salvage pathway; AMP from adenine: step 1/1. In terms of biological role, catalyzes a salvage reaction resulting in the formation of AMP, that is energically less costly than de novo synthesis. The polypeptide is Adenine phosphoribosyltransferase (Synechococcus sp. (strain RCC307)).